We begin with the raw amino-acid sequence, 351 residues long: DNA polymerase IV (351 aa).

The UmuC domain maps to I4 to G185. Mg(2+)-binding residues include D8 and D103. The active site involves E104.

This sequence belongs to the DNA polymerase type-Y family. As to quaternary structure, monomer. Mg(2+) is required as a cofactor.

It is found in the cytoplasm. It carries out the reaction DNA(n) + a 2'-deoxyribonucleoside 5'-triphosphate = DNA(n+1) + diphosphate. In terms of biological role, poorly processive, error-prone DNA polymerase involved in untargeted mutagenesis. Copies undamaged DNA at stalled replication forks, which arise in vivo from mismatched or misaligned primer ends. These misaligned primers can be extended by PolIV. Exhibits no 3'-5' exonuclease (proofreading) activity. May be involved in translesional synthesis, in conjunction with the beta clamp from PolIII. In Salmonella arizonae (strain ATCC BAA-731 / CDC346-86 / RSK2980), this protein is DNA polymerase IV.